The primary structure comprises 569 residues: GATOR1 complex protein NPRL3 (569 aa).

Disordered stretches follow at residues 27 to 60 (PFQR…EQDG) and 416 to 477 (PSEE…GDSP). Polar residues-rich tracts occupy residues 34 to 52 (HPAS…SNTG) and 438 to 468 (SLST…NSSA). Position 476 is a phosphoserine (serine 476).

It belongs to the NPR3 family. Within the GATOR complex, component of the GATOR1 subcomplex, made of DEPDC5, NPRL2 and NPRL3. GATOR1 mediates the strong interaction of the GATOR complex with small GTPases Rag (RagA/RRAGA, RagB/RRAGB, RagC/RRAGC and/or RagD/RRAGD) heterodimers. GATOR1 interacts with GPR155/LYCHOS; interaction takes place in presence of cholesterol and prevents interaction between GATOR1 and KICSTOR. As to expression, widely expressed. Expressed in the frontal lobe cortex as well as in the temporal, parietal, and occipital lobes.

The protein resides in the lysosome membrane. Functionally, as a component of the GATOR1 complex functions as an inhibitor of the amino acid-sensing branch of the mTORC1 pathway. In response to amino acid depletion, the GATOR1 complex has GTPase activating protein (GAP) activity and strongly increases GTP hydrolysis by RagA/RRAGA (or RagB/RRAGB) within heterodimeric Rag complexes, thereby turning them into their inactive GDP-bound form, releasing mTORC1 from lysosomal surface and inhibiting mTORC1 signaling. In the presence of abundant amino acids, the GATOR1 complex is negatively regulated by GATOR2, the other GATOR subcomplex, in this amino acid-sensing branch of the TORC1 pathway. In Homo sapiens (Human), this protein is GATOR1 complex protein NPRL3.